The primary structure comprises 140 residues: uncharacterized protein (140 aa).

This is an uncharacterized protein from Saccharomyces cerevisiae (strain ATCC 204508 / S288c) (Baker's yeast).